Reading from the N-terminus, the 930-residue chain is MTTGFLQKIFGSRNQRLVKQYQKTVATINALETQIEKLTDDQLRGKTGEFRQRIAAGESLDKLLPEAFAVCREASRRVLKMRHFDVQMIGGMVLHYGKIAEMRTGEGKTLVATLAAYLNALAGRGVHVVTVNDYLAQRDAEWMGRLYNFLGLSVGINLSGMEHDQKQAAYAADITYGTNNEFGFDYLRDNMVYETDARVQRPLNFAVVDEVDSILIDEARTPLIISGQAEDHTELYVRMNALPPLLERQIGEEKADGTGVEKPGDYTLDEKGRQVFLTESGHEKAERMLAEWGLIGDGESLYAPQNITLMHHVYAALRAHTLFHRDQHYVVQNGEVIIVDEFTGRLMPGRRWSDGLHQAVEAKEHVKIQSENQTLASITFQNYFRMYAKLSGMTGTADTEAYEFNEIYGLETVVIPTNRPPKRIDKQDQIYKTAKERYDAVIRDIRECYERGQPVLVGTTSIENSELLSHLLKQAGLPHEVLNAKQHAREAAIVAEAGRPKRVTIATNMAGRGTDIVLGGNVEKQAAFIEADEAIPADEKARRIQQLHDEWETLHEQVKTAGGLHIIGTERHESRRIDNQLRGRAGRQGDPGSSRFYLSLEDPLLRIFAGDRVRAIMDRLKMPEGEAIEAGIVTRSIESAQRKVEARNFDIRKQLLEYDDVSNDQRKVIYQQRNELLEAHDIAETIGAMRHGVISEVVRQFVPAGSIEEQWDLPELEETLRNDWQLDLAIQEMVNESSSINADEILDAVTTAADEHYEAKVALVGRESFSAFERSIMLQTLDRLWREHLAALDHLRQGIHLRGYAQKNPKQEYKREAFELFAAMLDAVKQEVTRIVMNVQIQSPEQLEEAAEQIEEQGGQLGNVEFQHADFAAAAAASAGGAVVADATAEMVGHAMSHSGPAGEVPRVGRNDPCPCGSGKKYKHCHGKLS.

Residues Q87, 105-109, and D515 each bind ATP; that span reads GEGKT. C914, C916, C925, and H926 together coordinate Zn(2+).

This sequence belongs to the SecA family. Monomer and homodimer. Part of the essential Sec protein translocation apparatus which comprises SecA, SecYEG and auxiliary proteins SecDF-YajC and YidC. The cofactor is Zn(2+).

Its subcellular location is the cell inner membrane. The protein localises to the cytoplasm. The catalysed reaction is ATP + H2O + cellular proteinSide 1 = ADP + phosphate + cellular proteinSide 2.. Its function is as follows. Part of the Sec protein translocase complex. Interacts with the SecYEG preprotein conducting channel. Has a central role in coupling the hydrolysis of ATP to the transfer of proteins into and across the cell membrane, serving both as a receptor for the preprotein-SecB complex and as an ATP-driven molecular motor driving the stepwise translocation of polypeptide chains across the membrane. This chain is Protein translocase subunit SecA, found in Burkholderia thailandensis (strain ATCC 700388 / DSM 13276 / CCUG 48851 / CIP 106301 / E264).